A 90-amino-acid chain; its full sequence is Large ribosomal subunit protein bL31 (90 aa).

The interval 71–90 is disordered; it reads KVKKFPSNADNQKEPAEEQE. Basic and acidic residues predominate over residues 81 to 90; that stretch reads NQKEPAEEQE.

It belongs to the bacterial ribosomal protein bL31 family. Type A subfamily. As to quaternary structure, part of the 50S ribosomal subunit.

In terms of biological role, binds the 23S rRNA. The chain is Large ribosomal subunit protein bL31 (rpmE) from Aster yellows witches'-broom phytoplasma (strain AYWB).